Here is a 484-residue protein sequence, read N- to C-terminus: Secreted RxLR effector protein 104 (484 aa).

Positions 1–24 are cleaved as a signal peptide; it reads MRSAYPVLTALLVVASSQIAAGSG. The short motif at 48-65 is the RxLR-dEER element; that stretch reads RFLRGSRDVHNNVANEER. N-linked (GlcNAc...) asparagine glycosylation occurs at Asn-175. Residues 324-463 are disordered; the sequence is ENPKGQSPYP…SSSVLTPEDV (140 aa). Over residues 327–346 the composition is skewed to polar residues; sequence KGQSPYPSTPLTAASTSKGG. Over residues 402 to 413 the composition is skewed to low complexity; it reads SSSSGPSRAFAP. Residues 418–428 show a composition bias toward polar residues; that stretch reads DQTFITENSRL.

Belongs to the RxLR effector family.

Its subcellular location is the secreted. It localises to the host nucleus. In terms of biological role, secreted effector that completely suppresses the host cell death induced by cell death-inducing proteins. The protein is Secreted RxLR effector protein 104 of Plasmopara viticola (Downy mildew of grapevine).